A 500-amino-acid polypeptide reads, in one-letter code: Cytochrome c-552 (500 aa).

A signal peptide spans 1–24 (MKFLIKSLAVATISILGCLQTALA). Heme c is bound by residues H102, C130, C133, K134, C168, C171, H172, C217, C220, and H221. Ca(2+)-binding residues include E223, Y224, K268, and Q270. Y224 lines the substrate pocket. A substrate-binding site is contributed by H271. Positions 282, 289, 292, 293, 308, 321, 324, 325, and 400 each coordinate heme c. Positions 477–500 (ARAKGLLPAEEADKPVAAPKAEAK) are disordered.

It belongs to the cytochrome c-552 family. It depends on Ca(2+) as a cofactor. Requires heme c as cofactor.

It is found in the periplasm. It carries out the reaction 6 Fe(III)-[cytochrome c] + NH4(+) + 2 H2O = 6 Fe(II)-[cytochrome c] + nitrite + 8 H(+). It functions in the pathway nitrogen metabolism; nitrate reduction (assimilation). Catalyzes the reduction of nitrite to ammonia, consuming six electrons in the process. The chain is Cytochrome c-552 from Mannheimia haemolytica (Pasteurella haemolytica).